Here is a 209-residue protein sequence, read N- to C-terminus: Probable GTP-binding protein EngB (209 aa).

An EngB-type G domain is found at 22-198; it reads TPLEIAFVGR…NRTVGSWFDA (177 aa). Positions 37 and 59 each coordinate Mg(2+).

The protein belongs to the TRAFAC class TrmE-Era-EngA-EngB-Septin-like GTPase superfamily. EngB GTPase family. It depends on Mg(2+) as a cofactor.

In terms of biological role, necessary for normal cell division and for the maintenance of normal septation. This Neisseria gonorrhoeae (strain ATCC 700825 / FA 1090) protein is Probable GTP-binding protein EngB.